A 479-amino-acid polypeptide reads, in one-letter code: RAC-gamma serine/threonine-protein kinase (479 aa).

Serine 2 bears the N-acetylserine mark. The region spanning 5 to 107 is the PH domain; that stretch reads TIVKEDWVQK…WTEAIQAVAD (103 aa). The cysteines at positions 59 and 76 are disulfide-linked. Residues 148-405 form the Protein kinase domain; it reads FDYLKLLGKG…PKEIMRHSFF (258 aa). ATP contacts are provided by residues 154–162 and lysine 177; that span reads LGKGTFGKV. Aspartate 271 acts as the Proton acceptor in catalysis. Cysteine 293 and cysteine 307 are joined by a disulfide. The O-linked (GlcNAc) threonine glycan is linked to threonine 302. At threonine 305 the chain carries Phosphothreonine; by PDPK1. The O-linked (GlcNAc) threonine glycan is linked to threonine 309. An AGC-kinase C-terminal domain is found at 406 to 479; sequence SGVNWQDVYD…QFSYSASGRE (74 aa). The interval 446 to 479 is disordered; sequence ITPPEKDDDDGMDCMDNERRPHFPQFSYSASGRE. Threonine 447 is modified (phosphothreonine). Residues 451-460 show a composition bias toward acidic residues; sequence KDDDDGMDCM. Serine 472 carries the post-translational modification Phosphoserine; by PKC/PRKCZ. Residue serine 472 is glycosylated (O-linked (GlcNAc) serine; alternate).

This sequence belongs to the protein kinase superfamily. AGC Ser/Thr protein kinase family. RAC subfamily. In terms of assembly, interacts (via PH domain) with TCL1A; this enhances AKT3 phosphorylation and activation. Interacts with TRAF6. Interacts with KCTD20. Interacts with BTBD10. In terms of processing, phosphorylation on Thr-305 and Ser-472 is required for full activity. Phosphorylation of the activation loop at Thr-305 by PDPK1/PDK1 is a prerequisite for full activation. Phosphorylation at Ser-472 by mTORC2 in response to growth factors plays a key role in AKT1 activation by facilitating subsequent phosphorylation of the activation loop by PDPK1/PDK1. Ubiquitinated. When fully phosphorylated and translocated into the nucleus, undergoes 'Lys-48'-polyubiquitination catalyzed by TTC3, leading to its degradation by the proteasome. Post-translationally, O-GlcNAcylation at Thr-302 and Thr-309 inhibits activating phosphorylation at Thr-305 via disrupting the interaction between AKT and PDPK1/PDK1.

It is found in the nucleus. It localises to the cytoplasm. The protein localises to the membrane. It carries out the reaction L-seryl-[protein] + ATP = O-phospho-L-seryl-[protein] + ADP + H(+). The enzyme catalyses L-threonyl-[protein] + ATP = O-phospho-L-threonyl-[protein] + ADP + H(+). Its activity is regulated as follows. Two specific sites, one in the kinase domain (Thr-305) and the other in the C-terminal regulatory region (Ser-472), need to be phosphorylated for its full activation. IGF-1 leads to the activation of AKT3, which may play a role in regulating cell survival. AKT3 is one of 3 closely related serine/threonine-protein kinases (AKT1, AKT2 and AKT3) called the AKT kinase, and which regulate many processes including metabolism, proliferation, cell survival, growth and angiogenesis. This is mediated through serine and/or threonine phosphorylation of a range of downstream substrates. Over 100 substrate candidates have been reported so far, but for most of them, no isoform specificity has been reported. AKT3 is the least studied AKT isoform. It plays an important role in brain development and is crucial for the viability of malignant glioma cells. AKT3 isoform may also be the key molecule in up-regulation and down-regulation of MMP13 via IL13. Required for the coordination of mitochondrial biogenesis with growth factor-induced increases in cellular energy demands. Down-regulation by RNA interference reduces the expression of the phosphorylated form of BAD, resulting in the induction of caspase-dependent apoptosis. In Rattus norvegicus (Rat), this protein is RAC-gamma serine/threonine-protein kinase (Akt3).